Reading from the N-terminus, the 391-residue chain is uncharacterized protein (391 aa).

The Flavodoxin-like domain maps to 247–387 (AVIVYATIYS…KIKEFGRKLA (141 aa)).

This is an uncharacterized protein from Methanocaldococcus jannaschii (strain ATCC 43067 / DSM 2661 / JAL-1 / JCM 10045 / NBRC 100440) (Methanococcus jannaschii).